A 397-amino-acid chain; its full sequence is Acetate kinase (397 aa).

N7 provides a ligand contact to Mg(2+). Residue K14 participates in ATP binding. Residue R90 participates in substrate binding. Residue D147 is the Proton donor/acceptor of the active site. Residues 207–211, 282–284, and 330–334 contribute to the ATP site; these read HLGNG, DFR, and GIGEN. E384 contacts Mg(2+).

It belongs to the acetokinase family. Homodimer. Mg(2+) serves as cofactor. Mn(2+) is required as a cofactor.

It localises to the cytoplasm. The catalysed reaction is acetate + ATP = acetyl phosphate + ADP. The protein operates within metabolic intermediate biosynthesis; acetyl-CoA biosynthesis; acetyl-CoA from acetate: step 1/2. Functionally, catalyzes the formation of acetyl phosphate from acetate and ATP. Can also catalyze the reverse reaction. In Agathobacter rectalis (strain ATCC 33656 / DSM 3377 / JCM 17463 / KCTC 5835 / VPI 0990) (Eubacterium rectale), this protein is Acetate kinase.